Consider the following 989-residue polypeptide: Protease PrtH (989 aa).

2 consecutive repeats follow at residues 270–323 (TPTD…KCVN) and 528–581 (SPAS…VCVD). The interval 969–989 (PRDTPWRYGKRELPPSASGMR) is disordered.

This sequence belongs to the peptidase C25 family.

It localises to the cytoplasmic vesicle. In terms of biological role, cleaves human complement component C3. May enable P.gingivalis to evade complement-mediated killing during the immune response. Plays an important role in soft tissue infections and is a virulence factor. The protein is Protease PrtH (prtH) of Porphyromonas gingivalis (strain ATCC BAA-308 / W83).